Reading from the N-terminus, the 261-residue chain is UPF0246 protein PMI0005 (261 aa).

It belongs to the UPF0246 family.

The polypeptide is UPF0246 protein PMI0005 (Proteus mirabilis (strain HI4320)).